We begin with the raw amino-acid sequence, 312 residues long: Protein YIPF2 (312 aa).

Position 2 is an N-acetylalanine (A2). Over 2–121 the chain is Cytoplasmic; it reads AAADELAFHE…LRNRPDLYGP (120 aa). The helical transmembrane segment at 122 to 142 threads the bilayer; it reads FWICATLAFVLAVTGNLTLVL. Topologically, residues 143–160 are lumenal; the sequence is AQRRDPSIHYSPQFHKVT. Residues 161–181 traverse the membrane as a helical segment; sequence IAGITIYCYAWLVPLALWGFL. Residues 182 to 193 are Cytoplasmic-facing; that stretch reads RWRQGTRERMGL. Residues 194-216 traverse the membrane as a helical segment; sequence YTFLETVCVYGYSLFVFIPTVVL. The Lumenal portion of the chain corresponds to 217-228; the sequence is WLIPVQWIQWLF. A helical transmembrane segment spans residues 229–249; sequence GALGLALSAAGLVFTLWPVVR. The Cytoplasmic segment spans residues 250 to 253; it reads EDTR. The helical transmembrane segment at 254 to 274 threads the bilayer; sequence LVAAALLSTVVLLHALLALGC. Over 275 to 312 the chain is Lumenal; the sequence is KLYFFQPLPLDHVVPAPQATPPSPNVLLPSSIQPMTTS.

It belongs to the YIP1 family. In terms of assembly, interacts with YIPF6; this interaction may stabilize YIPF2. May also form a ternary complex with YIPF1 and YIPF6.

It is found in the golgi apparatus. The protein resides in the cis-Golgi network membrane. The protein localises to the trans-Golgi network membrane. Its subcellular location is the late endosome membrane. The protein is Protein YIPF2 (Yipf2) of Mus musculus (Mouse).